The primary structure comprises 906 residues: Ribonucleoside-diphosphate reductase large subunit-like protein (906 aa).

2 disordered regions span residues 1–70 (MNPA…AGNT) and 89–129 (VSWR…LSTF). The segment covering 98–109 (PDGTPSVLSLTR) has biased composition (polar residues).

It belongs to the ribonucleoside diphosphate reductase large chain family.

The protein localises to the virion. It localises to the host cytoplasm. Its function is as follows. Does not possess a ribonucleotide reductase activity. Betaherpesviruses probably use another strategy to expand the dNTP pool in a quiescent host cell. The chain is Ribonucleoside-diphosphate reductase large subunit-like protein from Homo sapiens (Human).